A 101-amino-acid chain; its full sequence is Small ribosomal subunit protein uS14 (101 aa).

Belongs to the universal ribosomal protein uS14 family. In terms of assembly, part of the 30S ribosomal subunit. Contacts proteins S3 and S10.

Binds 16S rRNA, required for the assembly of 30S particles and may also be responsible for determining the conformation of the 16S rRNA at the A site. In Rhizorhabdus wittichii (strain DSM 6014 / CCUG 31198 / JCM 15750 / NBRC 105917 / EY 4224 / RW1) (Sphingomonas wittichii), this protein is Small ribosomal subunit protein uS14.